Consider the following 93-residue polypeptide: Acylphosphatase (93 aa).

The region spanning 6–93 (RAIVTVKGLV…GEFDTFDVRY (88 aa)) is the Acylphosphatase-like domain. Active-site residues include Arg-21 and Asn-39.

Belongs to the acylphosphatase family.

The enzyme catalyses an acyl phosphate + H2O = a carboxylate + phosphate + H(+). This Geobacter metallireducens (strain ATCC 53774 / DSM 7210 / GS-15) protein is Acylphosphatase (acyP).